We begin with the raw amino-acid sequence, 107 residues long: U1-lycotoxin-Ls1b (107 aa).

The first 20 residues, 1 to 20 (MMKVLVVVALLVTHISYSSS), serve as a signal peptide directing secretion. The propeptide occupies 21 to 41 (EGIDDLEADELLSLMANEQTR). 4 cysteine pairs are disulfide-bonded: Cys44-Cys59, Cys51-Cys68, Cys58-Cys86, and Cys70-Cys84.

The protein belongs to the neurotoxin 19 (CSTX) family. 04 (U1-Lctx) subfamily. Expressed by the venom gland.

It is found in the secreted. In Lycosa singoriensis (Wolf spider), this protein is U1-lycotoxin-Ls1b.